We begin with the raw amino-acid sequence, 217 residues long: Large ribosomal subunit protein uL3 (217 aa).

The disordered stretch occupies residues 129–162; it reads SRGPMSHGSKNHRAPGSTGAGTTPGRIYPGKRMA. Positions 142-153 are enriched in low complexity; that stretch reads APGSTGAGTTPG.

Belongs to the universal ribosomal protein uL3 family. Part of the 50S ribosomal subunit. Forms a cluster with proteins L14 and L19.

Its function is as follows. One of the primary rRNA binding proteins, it binds directly near the 3'-end of the 23S rRNA, where it nucleates assembly of the 50S subunit. This Prochlorococcus marinus (strain MIT 9215) protein is Large ribosomal subunit protein uL3.